Reading from the N-terminus, the 289-residue chain is ATP synthase subunit a (289 aa).

The next 6 membrane-spanning stretches (helical) occupy residues 43–63 (AFHVDTLGWSVALGLIFVLIF), 101–121 (SAVIAPLALTIFVWVFLMNAV), 160–180 (LSVFALIIFYSIKVKGIGGFI), 193–213 (IFVQALLIPVNFLLEFVTLIA), 232–252 (VFILIAVMFGSGLLWLSGLGI), and 259–279 (AVFHILIITLQAFIFMMLTIV).

This sequence belongs to the ATPase A chain family. As to quaternary structure, F-type ATPases have 2 components, CF(1) - the catalytic core - and CF(0) - the membrane proton channel. CF(1) has five subunits: alpha(3), beta(3), gamma(1), delta(1), epsilon(1). CF(0) has three main subunits: a(1), b(2) and c(9-12). The alpha and beta chains form an alternating ring which encloses part of the gamma chain. CF(1) is attached to CF(0) by a central stalk formed by the gamma and epsilon chains, while a peripheral stalk is formed by the delta and b chains.

It is found in the cell inner membrane. Its function is as follows. Key component of the proton channel; it plays a direct role in the translocation of protons across the membrane. The chain is ATP synthase subunit a from Pseudomonas syringae pv. tomato (strain ATCC BAA-871 / DC3000).